Here is a 110-residue protein sequence, read N- to C-terminus: Quaternary ammonium compound-resistance protein QacF (110 aa).

4 helical membrane passes run 1 to 21 (MKNW…TSAL), 31 to 51 (VPSV…SLAL), 58 to 78 (IAYA…AWIF), and 85 to 105 (FWAF…NLLS).

The protein belongs to the drug/metabolite transporter (DMT) superfamily. Small multidrug resistance (SMR) (TC 2.A.7.1) family.

Its subcellular location is the cell membrane. Its function is as follows. Multidrug exporter. Is implicated for the resistance to bacteriocidal quaternary ammonium compounds. The sequence is that of Quaternary ammonium compound-resistance protein QacF (qacF) from Klebsiella aerogenes (Enterobacter aerogenes).